Here is an 83-residue protein sequence, read N- to C-terminus: Sulfur carrier protein TusA (83 aa).

Residue Cys-19 is the Cysteine persulfide intermediate of the active site.

It belongs to the sulfur carrier protein TusA family.

Its subcellular location is the cytoplasm. Sulfur carrier protein which probably makes part of a sulfur-relay system. This is Sulfur carrier protein TusA from Aliivibrio salmonicida (strain LFI1238) (Vibrio salmonicida (strain LFI1238)).